Reading from the N-terminus, the 811-residue chain is Mitochondrial intermediate peptidase (811 aa).

Residues 1 to 25 constitute a mitochondrion transit peptide; that stretch reads MRSGSRLSNYLVRLSGRVSFTQKRS. Positions 423–450 are disordered; it reads TENGEKASTDTSTSTTTSTTTTDSTTTT. Over residues 431-450 the composition is skewed to low complexity; that stretch reads TDTSTSTTTSTTTTDSTTTT. H593 contributes to the Zn(2+) binding site. E594 is an active-site residue. Residues H597 and H600 each contribute to the Zn(2+) site.

This sequence belongs to the peptidase M3 family. It depends on Zn(2+) as a cofactor.

It is found in the mitochondrion matrix. The catalysed reaction is Release of an N-terminal octapeptide as second stage of processing of some proteins imported into the mitochondrion.. Its function is as follows. Cleaves proteins, imported into the mitochondrion, to their mature size. While most mitochondrial precursor proteins are processed to the mature form in one step by mitochondrial processing peptidase (MPP), the sequential cleavage by MIP of an octapeptide after initial processing by MPP is a required step for a subgroup of nuclear-encoded precursor proteins destined for the matrix or the inner membrane. The protein is Mitochondrial intermediate peptidase (OCT1) of Lodderomyces elongisporus (strain ATCC 11503 / CBS 2605 / JCM 1781 / NBRC 1676 / NRRL YB-4239) (Yeast).